Reading from the N-terminus, the 393-residue chain is Alpha-pyrone synthesis polyketide synthase-like Pks18 (393 aa).

Residues 1-26 (MNVSAESGAPRRAGQRHEVGLAQLPP) form a disordered region. Catalysis depends on C175, which acts as the Nucleophile. Position 221 (H221) interacts with substrate.

This sequence belongs to the thiolase-like superfamily. Chalcone/stilbene synthases family. In terms of assembly, homodimer.

It functions in the pathway lipid metabolism; fatty acid biosynthesis. Involved in the biosynthesis of tri- and tetraketide alpha-pyrones. Pks18 catalyzes the extension of medium- and long-chain aliphatic acyl-CoA substrates by using malonyl-CoA as an extender molecule to synthesize polyketide products. This Mycobacterium bovis (strain ATCC BAA-935 / AF2122/97) protein is Alpha-pyrone synthesis polyketide synthase-like Pks18 (pks18).